The chain runs to 135 residues: Small ribosomal subunit protein uS11 (135 aa).

It belongs to the universal ribosomal protein uS11 family. As to quaternary structure, part of the 30S ribosomal subunit. Interacts with proteins S7 and S18. Binds to IF-3.

Located on the platform of the 30S subunit, it bridges several disparate RNA helices of the 16S rRNA. Forms part of the Shine-Dalgarno cleft in the 70S ribosome. This Solibacter usitatus (strain Ellin6076) protein is Small ribosomal subunit protein uS11.